Consider the following 492-residue polypeptide: MEKVDIFKDIAERTGGDIYFGVVGAVRTGKSTFIKKFMELVVIPNIENESDRQRAQDELPQSAAGRTIMTTEPKFVPNQAVSIEVDEGLEVNIRLVDCVGYTVPGAKGYEDENGPRMINTPWYEEPIPFHEAAEIGTRKVIQEHSTIGVVITTDGTIGEIPRRDYIEAEERVVNELKEVGKPFIMIINTVQPYHPDTEQLRQSLSEEYDIPVIAMSVESLRETDVYNVLREALFEFPVLEVNVNLPSWVMVLNEGHWLRQSYQEAVQETVKDIKRLRDVDRVVWQFSQYEFIDRASLAGIDMGQGVAEIDLYAPDELYDQILKEVVGVEIRGKDHLLKLMLDLSHAKIEYDQVADALRMVKQTGYGVAAPALADMSLDEPEIIRHGSRFGVKLKAVAPSIHMIKVDVESTFEPIIGTEKQSEELVRYLMQDFEDDPLSIWNSDIFGRSLSSIVREGIQAKLSLMPENARYKLKETLERIINEGSGGLIAIIL.

The Walker A motif; involved in ATP-binding motif lies at 24–31 (GAVRTGKS). 24 to 31 (GAVRTGKS) provides a ligand contact to ATP.

It localises to the cytoplasm. The catalysed reaction is ATP + H2O = ADP + phosphate + H(+). ATPase. Has a role at an early stage in the morphogenesis of the spore coat outer layers. Directs the assembly of the coat and exosporium to an area around the forespore. The sequence is that of Stage IV sporulation protein A from Bacillus anthracis.